The sequence spans 514 residues: Voltage-gated potassium channel regulatory subunit KCNG1 (514 aa).

The Cytoplasmic portion of the chain corresponds to 1-224; it reads MTLLPGDNSD…DMVEKPHSGL (224 aa). Residues 181–196 are compositionally biased toward acidic residues; it reads EREDEEEALDSEDQES. Residues 181-205 form a disordered region; it reads EREDEEEALDSEDQESEGPSTSEGR. The helical transmembrane segment at 225 to 246 threads the bilayer; it reads PGKVFACLSVLFVTVTAVNLSV. Residues 247-267 lie on the Extracellular side of the membrane; sequence STLPSLREEEEQGQCSQMCHN. Residues 268 to 289 form a helical membrane-spanning segment; the sequence is VFIVESVCVGWFSLEFLLRFIQ. The Cytoplasmic segment spans residues 290–300; that stretch reads APSKFAFLRSP. Residues 301-321 traverse the membrane as a helical segment; sequence LTLIDLVAILPYYVTLLVDGA. Residues 322–338 lie on the Extracellular side of the membrane; that stretch reads ASSRRKPSTGNSYLDKV. Residues 339–359 traverse the membrane as a helical; Voltage-sensor segment; that stretch reads GLVLRVLRALRILYVMRLARH. Residues 360–374 are Cytoplasmic-facing; sequence SLGLQTLGLTARRCT. Residues 375 to 396 form a helical membrane-spanning segment; that stretch reads REFGLLLLFLCVAIALFAPLLY. At 397–411 the chain is on the extracellular side; the sequence is VIENEMADSPEFTSI. Positions 412-423 form an intramembrane region, helical; it reads PACYWWAVITMT. A Selectivity filter motif is present at residues 424–429; the sequence is TVGYGD. The stretch at 424–431 is an intramembrane region; that stretch reads TVGYGDMV. Over 432-438 the chain is Extracellular; that stretch reads PRSTPGQ. A helical transmembrane segment spans residues 439 to 467; sequence VVALSSILSGILLMAFPVTSIFHTFSRSY. Residues 468–514 lie on the Cytoplasmic side of the membrane; the sequence is LELKQEQERVLIRRAQYLIKTKSQLSGMSQDSDILFGSASSDTRDNN.

This sequence belongs to the potassium channel family. G (TC 1.A.1.2) subfamily. Kv6.1/KCNG1 sub-subfamily. In terms of assembly, heterotetramer with KCNB1 or KCNB2.

The protein resides in the cell membrane. Regulatory alpha-subunit of the voltage-gated potassium (Kv) channel which, when coassembled with KCNB1 or KCNB2, can modulate their expression and their gating kinetics by acting on deactivation upon repolarization and inactivation during maintained depolarization. Potassium channel subunit that does not form functional channels by itself. The chain is Voltage-gated potassium channel regulatory subunit KCNG1 from Rattus norvegicus (Rat).